Here is a 637-residue protein sequence, read N- to C-terminus: Keratin, type II cytoskeletal 1 (637 aa).

The segment at 1-187 is head; that stretch reads MSLQCSSRSL…DPQIQKVKSQ (187 aa). Arg12 bears the Omega-N-methylarginine mark. Ser21 and Ser24 each carry phosphoserine. Arg49 bears the Omega-N-methylarginine mark. The residue at position 67 (Ser67) is a Phosphoserine. A coiled-coil region spans residues 180 to 328; it reads QIQKVKSQER…DIDFFSALYQ (149 aa). The segment at 188 to 223 is coil 1A; it reads EREQIKSLNDKFASFIDKVRFLEQQNQVLQTKWELL. The 314-residue stretch at 188–501 folds into the IF rod domain; it reads EREQIKSLND…KLLEGEEIRM (314 aa). Positions 224-243 are linker 1; that stretch reads QQVDTTTRTQNLDPFFENYI. A coil 1B region spans residues 244–334; that stretch reads SILRRKVDSL…ALYQMEMSQM (91 aa). Lys284 is modified (N6,N6-dimethyllysine). The tract at residues 335 to 358 is linker 12; the sequence is QTQISETNVVLSMDNNRSLDLDGI. Ser352 carries the phosphoserine modification. The segment at 359–497 is coil 2; sequence ISEVKAQYDS…ATYKKLLEGE (139 aa). Residues 397 to 483 are a coiled coil; the sequence is DSVRNTKMEI…QELMNTKLAL (87 aa). Positions 498-637 are tail; it reads EIRMSGECTP…VSTSYSRGTK (140 aa). Disordered stretches follow at residues 505 to 533 and 563 to 637; these read CTPN…SGGG and YGGG…RGTK. Low complexity predominate over residues 509–524; it reads VSVSVSTSHTSMSGSS. Residues Arg526, Arg585, and Arg607 each carry the omega-N-methylarginine modification. Over residues 563–618 the composition is skewed to gly residues; the sequence is YGGGSGGGSYGGGSGGGSSGSHRGGSGGGGGSSGGSYGGSSGGGRGGSSSGGGGVK. Polar residues predominate over residues 624–637; sequence TVKFVSTSYSRGTK.

It belongs to the intermediate filament family. In terms of assembly, heterotetramer of two type I and two type II keratins. Heterodimer with KRT10. Two heterodimers of KRT1 and KRT10 form a heterotetramer. Forms a heterodimer with KRT14; the interaction is more abundant in the absence of KRT5. Interacts with PLEC isoform 1C, when in a heterodimer with KRT10. Interacts with ITGB1 in the presence of RACK1 and SRC, and with RACK1. Interacts with C1QBP; the association represents a cell surface kininogen receptor. Interacts with EPPK1; interaction is dependent of higher-order structure of intermediate filament. In terms of processing, undergoes deimination of some arginine residues (citrullination). In terms of tissue distribution, expressed in the infundibular regions of the ear, the interfollicular epidermis of the back, in the interscale regions containing hair follicles in the tail, and in the soles of the footpads (at protein level).

It localises to the cell membrane. Its subcellular location is the cytoplasm. Its function is as follows. May regulate the activity of kinases such as PKC and SRC via binding to integrin beta-1 (ITB1) and the receptor of activated protein C kinase 1 (RACK1). In complex with C1QBP is a high affinity receptor for kininogen-1/HMWK. The protein is Keratin, type II cytoskeletal 1 (Krt1) of Mus musculus (Mouse).